Reading from the N-terminus, the 686-residue chain is Antigen peptide transporter 2 (686 aa).

Residues 1-6 (MRLPDL) are Lumenal-facing. The helical transmembrane segment at 7–27 (RPWTSLLLVDAALLWLLQGPL) threads the bilayer. Residues 28 to 56 (GTLLPQGLPGLWLEGTLRLGGLWGLLKLR) are Cytoplasmic-facing. The helical transmembrane segment at 57 to 77 (GLLGFVGTLLLPLCLATPLTV) threads the bilayer. At 78 to 98 (SLRALVAGASRAPPARVASAP) the chain is on the lumenal side. The chain crosses the membrane as a helical span at residues 99–119 (WSWLLVGYGAAGLSWSLWAVL). The Cytoplasmic portion of the chain corresponds to 120-148 (SPPGAQEKEQDQVNNKVLMWRLLKLSRPD). Residues 149 to 169 (LPLLVAAFFFLVLAVLGETLI) traverse the membrane as a helical segment. In terms of domain architecture, ABC transmembrane type-1 spans 152-435 (LVAAFFFLVL…LVYIYGDMLS (284 aa)). Residues 170-187 (PHYSGRVIDILGGDFDPH) lie on the Lumenal side of the membrane. Residues 188–208 (AFASAIFFMCLFSFGSSLSAG) traverse the membrane as a helical segment. Residues 209–266 (CRGGCFTYTMSRINLRIREQLFSSLLRQDLGFFQETKTGELNSRLSSDTTLMSNWLPL) lie on the Cytoplasmic side of the membrane. The chain crosses the membrane as a helical span at residues 267 to 287 (NANVLLRSLVKVVGLYGFMLS). Residues 288 to 293 (ISPRLT) lie on the Lumenal side of the membrane. A helical membrane pass occupies residues 294 to 314 (LLSLLHMPFTIAAEKVYNTRH). The part of the peptide-binding site stretch occupies residues 301 to 389 (PFTIAAEKVY…RRVLHLGVQM (89 aa)). At 315–374 (QEVLREIQDAVARAGQVVREAVGGLQTVRSFGAEEHEVCRYKEALEQCRQLYWRRDLERA) the chain is on the cytoplasmic side. A helical transmembrane segment spans residues 375–395 (LYLLVRRVLHLGVQMLMLSCG). Residues 396-408 (LQQMQDGELTQGS) lie on the Lumenal side of the membrane. The chain crosses the membrane as a helical span at residues 409–429 (LLSFMIYQESVGSYVQTLVYI). The tract at residues 414–433 (IYQESVGSYVQTLVYIYGDM) is part of the peptide-binding site. Over 430-686 (YGDMLSNVGA…EGKLQKLAQL (257 aa)) the chain is Cytoplasmic. An ABC transporter domain is found at 468–686 (VKFQDVSFAY…EGKLQKLAQL (219 aa)). 503–510 (GPNGSGKS) lines the ATP pocket.

The protein belongs to the ABC transporter superfamily. ABCB family. MHC peptide exporter (TC 3.A.1.209) subfamily. Heterodimer of TAP1 and TAP2 (TAP1-TAP2). A component of the peptide loading complex (PLC), interacts via TAPBP with MHCI heterodimer; this interaction mediates peptide-MHCI assembly. Recruits TAPBP in a 1:1 stoichiometry. Interacts with classical MHCI such as HLA-A*02-B2M; this interaction is obligatory for the loading of peptide epitopes. Interacts with non-classical MHCI molecules including HLA-E-B2M and HLA-F-B2M as well as PLC component CALR before the peptide loading. In terms of assembly, (Microbial infection) Interacts with Epstein-Barr virus BLNF2a. As to quaternary structure, (Microbial infection) Interacts with herpes simplex virus US12/ICP47. (Microbial infection) Interacts with adenovirus E3-19K glycoprotein, which binds TAP1-TAP2 and acts as a TAPBP inhibitor, preventing TAP1-TAP2 association with MHCI. It depends on Mg(2+) as a cofactor.

It localises to the endoplasmic reticulum membrane. The enzyme catalyses a peptide antigen(in) + ATP + H2O = a peptide antigen(out) + ADP + phosphate + H(+). Its activity is regulated as follows. Inhibited at high ER lumenal peptide concentrations. (Microbial infection) Inhibited by herpes simplex virus US12/ICP47 protein, which blocks the peptide-binding site of TAP1-TAP2. With respect to regulation, (Microbial infection) Inhibited by human cytomegalovirus US6 glycoprotein, which binds to the lumenal side of TAP1-TAP2 complex and inhibits peptide translocation by specifically blocking ATP-binding and preventing TAP1-TAP2 conformational rearrangement induced by peptide binding. ABC transporter associated with antigen processing. In complex with TAP1 mediates unidirectional translocation of peptide antigens from cytosol to endoplasmic reticulum (ER) for loading onto MHC class I (MHCI) molecules. Uses the chemical energy of ATP to export peptides against the concentration gradient. During the transport cycle alternates between 'inward-facing' state with peptide binding site facing the cytosol to 'outward-facing' state with peptide binding site facing the ER lumen. Peptide antigen binding to ATP-loaded TAP1-TAP2 induces a switch to hydrolysis-competent 'outward-facing' conformation ready for peptide loading onto nascent MHCI molecules. Subsequently ATP hydrolysis resets the transporter to the 'inward facing' state for a new cycle. Typically transports intracellular peptide antigens of 8 to 13 amino acids that arise from cytosolic proteolysis via IFNG-induced immunoproteasome. Binds peptides with free N- and C-termini, the first three and the C-terminal residues being critical. Preferentially selects peptides having a highly hydrophobic residue at position 3 and hydrophobic or charged residues at the C-terminal anchor. Proline at position 2 has the most destabilizing effect. As a component of the peptide loading complex (PLC), acts as a molecular scaffold essential for peptide-MHCI assembly and antigen presentation. This Homo sapiens (Human) protein is Antigen peptide transporter 2.